A 161-amino-acid polypeptide reads, in one-letter code: Protein-export protein SecB (161 aa).

This sequence belongs to the SecB family. As to quaternary structure, homotetramer, a dimer of dimers. One homotetramer interacts with 1 SecA dimer.

The protein resides in the cytoplasm. One of the proteins required for the normal export of preproteins out of the cell cytoplasm. It is a molecular chaperone that binds to a subset of precursor proteins, maintaining them in a translocation-competent state. It also specifically binds to its receptor SecA. This chain is Protein-export protein SecB, found in Afipia carboxidovorans (strain ATCC 49405 / DSM 1227 / KCTC 32145 / OM5) (Oligotropha carboxidovorans).